Here is a 40-residue protein sequence, read N- to C-terminus: Snaclec tokaracetin subunit beta (40 aa).

Cys-2 and Cys-13 are oxidised to a cystine. Positions 9–40 (YDEHCYRVFQQKMNWEDAEKFCTQQHKGXHLX) constitute a C-type lectin domain.

The protein belongs to the snaclec family. As to quaternary structure, heterodimer of subunits alpha and beta; disulfide-linked. In terms of tissue distribution, expressed by the venom gland.

It localises to the secreted. In terms of biological role, platelet antagonist that specifically and reversibly binds to a site on platelet glycoprotein Ibalpha (GP1BA) close to or identical with the site for vWF binding. It inhibits the binding of vWF to platelets and vWF-dependent shear-induced platelet aggregation. The polypeptide is Snaclec tokaracetin subunit beta (Protobothrops tokarensis (Tokara habu)).